The chain runs to 229 residues: Peptidase E (229 aa).

Active-site charge relay system residues include Ser120, Asp135, and His157.

Belongs to the peptidase S51 family.

Its subcellular location is the cytoplasm. The enzyme catalyses Dipeptidase E catalyzes the hydrolysis of dipeptides Asp-|-Xaa. It does not act on peptides with N-terminal Glu, Asn or Gln, nor does it cleave isoaspartyl peptides.. Its function is as follows. Hydrolyzes dipeptides containing N-terminal aspartate residues. May play a role in allowing the cell to use peptide aspartate to spare carbon otherwise required for the synthesis of the aspartate family of amino acids. The protein is Peptidase E of Citrobacter koseri (strain ATCC BAA-895 / CDC 4225-83 / SGSC4696).